The following is a 279-amino-acid chain: HTH-type transcriptional regulator HdfR (279 aa).

The HTH lysR-type domain maps to 1–58 (MDTELLKTFLEVSRTRHFGRAAESLYLTQSAVSFRIRQLENQLGVNLFTRHRNNIRLT). The H-T-H motif DNA-binding region spans 18-37 (FGRAAESLYLTQSAVSFRIR).

This sequence belongs to the LysR transcriptional regulatory family.

Functionally, negatively regulates the transcription of the flagellar master operon flhDC by binding to the upstream region of the operon. The sequence is that of HTH-type transcriptional regulator HdfR from Shigella boydii serotype 18 (strain CDC 3083-94 / BS512).